Here is a 400-residue protein sequence, read N- to C-terminus: DNA primase large subunit PriL (400 aa).

The [4Fe-4S] cluster site is built by Cys-247, Cys-356, Cys-367, and Cys-373.

The protein belongs to the eukaryotic-type primase large subunit family. Heterodimer of a small subunit (PriS) and a large subunit (PriL). [4Fe-4S] cluster is required as a cofactor.

Functionally, regulatory subunit of DNA primase, an RNA polymerase that catalyzes the synthesis of short RNA molecules used as primers for DNA polymerase during DNA replication. Stabilizes and modulates the activity of the small subunit, increasing the rate of DNA synthesis, and conferring RNA synthesis capability. The DNA polymerase activity may enable DNA primase to also catalyze primer extension after primer synthesis. May also play a role in DNA repair. The chain is DNA primase large subunit PriL from Thermococcus kodakarensis (strain ATCC BAA-918 / JCM 12380 / KOD1) (Pyrococcus kodakaraensis (strain KOD1)).